A 339-amino-acid chain; its full sequence is MLSYSLLLLALAFPAGHAGSCEQASISEKKEKILNLLACWTEGNADNSLSRSGGSPTGDMNYGYRSCNEIKSSDSRAPDGIYTLATEDGESYQTFCDMTTNGGGWTLVASVHENNMFGKCTVGDRWSTQQGNMLQNPEGDGNWANYATFGLPEGATSDDYKNPGYYDIEAKNLALWHVPNKTPMVMWRNSSILRYRTQNGFLTEEGGNLFELYKKYPVKYDIGKCLADNGPAVPVVYDLGSAEKTASLYSPNGRSEFTPGFVQFRAVNSERATLALCAGVKVKGCNVEHHCIGGGGYIPEGSPRQCGDFAALDWDGYGTNLGWSASKQIIEAAVMLFYR.

The N-terminal stretch at 1-18 is a signal peptide; sequence MLSYSLLLLALAFPAGHA. Residues 58-108 enclose the Fibrinogen C-terminal domain; the sequence is GDMNYGYRSCNEIKSSDSRAPDGIYTLATEDGESYQTFCDMTTNGGGWTLV. Residues C67 and C96 are joined by a disulfide bond. The Ca(2+) site is built by H112, E113, N115, G118, G123, D124, and D159. Disulfide bonds link C120/C306, C225/C285, and C277/C291. N189 carries an N-linked (GlcNAc...) asparagine glycan. Ca(2+) is bound by residues N286, E288, E300, and D308. Residues 288–289 and E300 contribute to the a carbohydrate site; that span reads EH.

As to quaternary structure, homotrimer; disulfide-linked. Homohexamer; disulfide-linked. Forms primarily homotrimers in solution, but can also form homohexamers. In terms of processing, N-glycosylated.

Its subcellular location is the secreted. The protein resides in the cytoplasmic vesicle. It localises to the secretory vesicle. Functionally, lectin that specifically recognizes microbial carbohydrate chains in a calcium-dependent manner. Binds to microbial glycans that contain a terminal acyclic 1,2-diol moiety, including beta-linked D-galactofuranose (beta-Galf) and D-phosphoglycerol-modified glycans. Binds to S.pneumoniae serotypes with glycans that contain beta-linked D-galactofuranose (beta-Galf) and with D-phosphoglycerol-modified glycans. Can bind a variety of monosaccharides (in vitro). Probably plays a role in the defense system against microorganisms. The sequence is that of Intelectin-1 (itln1) from Xenopus laevis (African clawed frog).